Here is a 47-residue protein sequence, read N- to C-terminus: Large ribosomal subunit protein bL34 (47 aa).

This sequence belongs to the bacterial ribosomal protein bL34 family.

The polypeptide is Large ribosomal subunit protein bL34 (Corynebacterium glutamicum (strain R)).